The sequence spans 468 residues: ATP synthase subunit beta (468 aa).

Position 155–162 (155–162 (GGAGVGKT)) interacts with ATP.

The protein belongs to the ATPase alpha/beta chains family. F-type ATPases have 2 components, CF(1) - the catalytic core - and CF(0) - the membrane proton channel. CF(1) has five subunits: alpha(3), beta(3), gamma(1), delta(1), epsilon(1). CF(0) has three main subunits: a(1), b(2) and c(9-12). The alpha and beta chains form an alternating ring which encloses part of the gamma chain. CF(1) is attached to CF(0) by a central stalk formed by the gamma and epsilon chains, while a peripheral stalk is formed by the delta and b chains.

It localises to the cell membrane. The enzyme catalyses ATP + H2O + 4 H(+)(in) = ADP + phosphate + 5 H(+)(out). In terms of biological role, produces ATP from ADP in the presence of a proton gradient across the membrane. The catalytic sites are hosted primarily by the beta subunits. The chain is ATP synthase subunit beta from Streptococcus equi subsp. zooepidemicus (strain H70).